The sequence spans 402 residues: 2,3-bisphosphoglycerate-independent phosphoglycerate mutase (402 aa).

The segment at S155 to P174 is disordered. A compositionally biased stretch (basic and acidic residues) spans S160–P174.

Belongs to the BPG-independent phosphoglycerate mutase family. A-PGAM subfamily.

The enzyme catalyses (2R)-2-phosphoglycerate = (2R)-3-phosphoglycerate. It participates in carbohydrate degradation; glycolysis; pyruvate from D-glyceraldehyde 3-phosphate: step 3/5. Catalyzes the interconversion of 2-phosphoglycerate and 3-phosphoglycerate. This Picrophilus torridus (strain ATCC 700027 / DSM 9790 / JCM 10055 / NBRC 100828 / KAW 2/3) protein is 2,3-bisphosphoglycerate-independent phosphoglycerate mutase.